The sequence spans 433 residues: Arabinooligosaccharide-binding protein (433 aa).

Positions 1–21 are cleaved as a signal peptide; that stretch reads MKKMTVCFLVLMMLLTLVIAG. C22 carries N-palmitoyl cysteine lipidation. C22 is lipidated: S-diacylglycerol cysteine.

Belongs to the bacterial solute-binding protein 1 family. In terms of assembly, the complex is composed of two ATP-binding proteins (MsmX), two transmembrane proteins (AraP and AraQ) and a solute-binding protein (AraN).

It is found in the cell membrane. Functionally, part of the ABC transporter complex AraNPQ involved in the uptake of arabinooligosaccharides. Transports alpha-1,5-arabinooligosaccharides, at least up to four L-arabinosyl units. AraN captures the substrate and delivers it to the two transmembrane components. This is Arabinooligosaccharide-binding protein from Bacillus subtilis (strain 168).